The sequence spans 657 residues: tRNA 5-methylaminomethyl-2-thiouridine biosynthesis bifunctional protein MnmC (657 aa).

The tract at residues 1-238 (MPASTLLQHA…KWEVMSGEYT (238 aa)) is tRNA (mnm(5)s(2)U34)-methyltransferase. The tract at residues 265–657 (IGAGLAGSAS…FGLRRLIRGK (393 aa)) is FAD-dependent cmnm(5)s(2)U34 oxidoreductase.

This sequence in the N-terminal section; belongs to the methyltransferase superfamily. tRNA (mnm(5)s(2)U34)-methyltransferase family. It in the C-terminal section; belongs to the DAO family. FAD is required as a cofactor.

The protein resides in the cytoplasm. It catalyses the reaction 5-aminomethyl-2-thiouridine(34) in tRNA + S-adenosyl-L-methionine = 5-methylaminomethyl-2-thiouridine(34) in tRNA + S-adenosyl-L-homocysteine + H(+). Its function is as follows. Catalyzes the last two steps in the biosynthesis of 5-methylaminomethyl-2-thiouridine (mnm(5)s(2)U) at the wobble position (U34) in tRNA. Catalyzes the FAD-dependent demodification of cmnm(5)s(2)U34 to nm(5)s(2)U34, followed by the transfer of a methyl group from S-adenosyl-L-methionine to nm(5)s(2)U34, to form mnm(5)s(2)U34. The polypeptide is tRNA 5-methylaminomethyl-2-thiouridine biosynthesis bifunctional protein MnmC (Pseudomonas putida (strain W619)).